The sequence spans 505 residues: MAAPSAIPRRGLFIGGGWREPSLGRRLPVVNPATEATIGDIPAATAEDVELAVSAARDAFGRDGGRHWSRAPGAVRAKYLKAIAAKIKDKKSYLALLETLDSGKPLDEAAGDMEDVAACFEYYADLAEALDGKQRAPISLPMENFESYVLKEPIGVVGLITPWNYPLLMATWKVAPALAAGCTAVLKPSELASLTCLELGGICAEIGLPPGVLNIITGLGTEAGAPLASHPHVDKIAFTGSTETGKRIMITASQMVKPVSLELGGKSPLIVFDDVDIDKAVEWAMFGCFANAGQVCSATSRLLLHEKIAKRFLDRLVAWAKSIKISDPLEEGCRLGSVVSEGQYQKIMKFISTARCEGATILYGGARPQHLKRGFFIEPTIITNVSTSMQIWREEVFGPVICVKEFRTEREAVELANDTHYGLAGAVISNDLERCERISKAIQSGIVWINCSQPCFVQAPWGGNKRSGFGRELGQWGLDNYLSVKQVTKYCSDEPYGWYRPPSKL.

163–172 (WNYPLLMATW) provides a ligand contact to betaine aldehyde. 240–245 (GSTETG) is an NAD(+) binding site. Residues Glu262, 294–297 (QVCS), and Cys455 contribute to the betaine aldehyde site. Residues Glu262 and Cys296 contribute to the active site. Residues 262-263 (EL) and Cys296 contribute to the 4-aminobutanal site. Residue Trp461 participates in 4-aminobutanal binding. The Microbody targeting signal signature appears at 503-505 (SKL).

Belongs to the aldehyde dehydrogenase family. As to quaternary structure, homodimer.

It is found in the peroxisome. The enzyme catalyses betaine aldehyde + NAD(+) + H2O = glycine betaine + NADH + 2 H(+). It participates in amine and polyamine biosynthesis; betaine biosynthesis via choline pathway; betaine from betaine aldehyde: step 1/1. Dehydrogenase that can use N-acetyl-gamma-aminobutyraldehyde (NAGABald), gamma-guanidinobutyraldehyde (GGBald), betaine aldehyde (Bet-ald), gamma-aminobutyraldehyde (GAB-ald), acetaldehyde, 4-aminobutylaldehyde (AB-ald), 3-aminopropionaldehyde (AP-ald), 4-N-trimethylaminobutyraldehyde (TMAB-ald) and 3-N-trimethylaminopropionaldehyde (TMAP-ald) as substrates. Catalyzes the oxidation of GAB-ald more efficiently than Bet-ald. May convert acetaldehyde into acetate, thus facilitating the production of acetyl-CoA in peroxisomes under anaerobic conditions. This Oryza sativa subsp. japonica (Rice) protein is Betaine aldehyde dehydrogenase 1 (BADH1).